Consider the following 234-residue polypeptide: Orotidine 5'-phosphate decarboxylase (234 aa).

Substrate is bound by residues aspartate 10, lysine 32, 59–68 (DLKLHDIPTT), threonine 122, arginine 184, glutamine 193, glycine 213, and arginine 214. Lysine 61 serves as the catalytic Proton donor.

This sequence belongs to the OMP decarboxylase family. Type 1 subfamily. As to quaternary structure, homodimer.

The catalysed reaction is orotidine 5'-phosphate + H(+) = UMP + CO2. It functions in the pathway pyrimidine metabolism; UMP biosynthesis via de novo pathway; UMP from orotate: step 2/2. Its function is as follows. Catalyzes the decarboxylation of orotidine 5'-monophosphate (OMP) to uridine 5'-monophosphate (UMP). This chain is Orotidine 5'-phosphate decarboxylase, found in Bacillus pumilus (strain SAFR-032).